A 109-amino-acid polypeptide reads, in one-letter code: Spermidine export protein MdtI (109 aa).

The next 4 membrane-spanning stretches (helical) occupy residues 6-26 (WVHGAWLALAIILEIAANVLL), 36-56 (CYGILSLAAVLAAFSALSQAV), 64-84 (AYALWGGFGIAATLAAGWVLF), and 88-108 (LNPKGWVGVVLLLVGMIMIKL).

This sequence belongs to the drug/metabolite transporter (DMT) superfamily. Small multidrug resistance (SMR) (TC 2.A.7.1) family. MdtI subfamily. As to quaternary structure, forms a complex with MdtJ.

It is found in the cell inner membrane. Its function is as follows. Catalyzes the excretion of spermidine. The polypeptide is Spermidine export protein MdtI (Salmonella arizonae (strain ATCC BAA-731 / CDC346-86 / RSK2980)).